The primary structure comprises 511 residues: Cobyric acid synthase (511 aa).

In terms of domain architecture, GATase cobBQ-type spans 251 to 443; it reads LLDIAIICLP…IHGIFDNDIF (193 aa). Catalysis depends on Cys-332, which acts as the Nucleophile. The active site involves His-435.

This sequence belongs to the CobB/CobQ family. CobQ subfamily.

It participates in cofactor biosynthesis; adenosylcobalamin biosynthesis. Functionally, catalyzes amidations at positions B, D, E, and G on adenosylcobyrinic A,C-diamide. NH(2) groups are provided by glutamine, and one molecule of ATP is hydrogenolyzed for each amidation. The polypeptide is Cobyric acid synthase (Listeria innocua serovar 6a (strain ATCC BAA-680 / CLIP 11262)).